A 270-amino-acid polypeptide reads, in one-letter code: Thymidine kinase 2, mitochondrial (270 aa).

The transit peptide at 1 to 38 (MLLRSLRSWAARSPRSVGPGSSGSPGSLDSGAGPLWAP) directs the protein to the mitochondrion. A disordered region spans residues 1–54 (MLLRSLRSWAARSPRSVGPGSSGSPGSLDSGAGPLWAPRRAWPPDKDRENDKEK). Residues 13-34 (SPRSVGPGSSGSPGSLDSGAGP) show a composition bias toward low complexity. Over residues 42-54 (WPPDKDRENDKEK) the composition is skewed to basic and acidic residues. An ATP-binding site is contributed by 62 to 70 (GNIASGKTT). Glu138 serves as the catalytic Proton acceptor.

It belongs to the DCK/DGK family. As to quaternary structure, homodimer. In terms of tissue distribution, found in most tissues; highly expressed in liver.

The protein resides in the mitochondrion. The enzyme catalyses thymidine + ATP = dTMP + ADP + H(+). The catalysed reaction is 2'-deoxycytidine + ATP = dCMP + ADP + H(+). It catalyses the reaction 2'-deoxyuridine + ATP = dUMP + ADP + H(+). Functionally, phosphorylates thymidine, deoxycytidine, and deoxyuridine in the mitochondrial matrix. In non-replicating cells, where cytosolic dNTP synthesis is down-regulated, mtDNA synthesis depends solely on TK2 and DGUOK. The sequence is that of Thymidine kinase 2, mitochondrial (Tk2) from Mus musculus (Mouse).